The following is a 673-amino-acid chain: UvrABC system protein B (673 aa).

The region spanning 26 to 183 (EGLEDGLAHQ…RRLAELQYAR (158 aa)) is the Helicase ATP-binding domain. Residue 39–46 (GVTGSGKT) participates in ATP binding. The Beta-hairpin signature appears at 92-115 (YYDYYQPEAYVPSSDTFIEKDASV). The Helicase C-terminal domain maps to 431–597 (QVDDLLSEIR…GLNKKVVDIL (167 aa)). The UVR domain occupies 633–668 (QQKIHELEGLMMQHAQNLEFEEAAQVRDQLHQLRQL).

This sequence belongs to the UvrB family. As to quaternary structure, forms a heterotetramer with UvrA during the search for lesions. Interacts with UvrC in an incision complex.

The protein localises to the cytoplasm. The UvrABC repair system catalyzes the recognition and processing of DNA lesions. A damage recognition complex composed of 2 UvrA and 2 UvrB subunits scans DNA for abnormalities. Upon binding of the UvrA(2)B(2) complex to a putative damaged site, the DNA wraps around one UvrB monomer. DNA wrap is dependent on ATP binding by UvrB and probably causes local melting of the DNA helix, facilitating insertion of UvrB beta-hairpin between the DNA strands. Then UvrB probes one DNA strand for the presence of a lesion. If a lesion is found the UvrA subunits dissociate and the UvrB-DNA preincision complex is formed. This complex is subsequently bound by UvrC and the second UvrB is released. If no lesion is found, the DNA wraps around the other UvrB subunit that will check the other stand for damage. In Enterobacter sp. (strain 638), this protein is UvrABC system protein B.